The chain runs to 659 residues: Interferon-induced GTP-binding protein Mx2 (659 aa).

One can recognise a Dynamin-type G domain in the interval 65–338; it reads DLALPAIAVI…LISHICKSLP (274 aa). The interval 75–82 is G1 motif; sequence GDQSSGKS. A GTP-binding site is contributed by 75-82; the sequence is GDQSSGKS. The segment at 100–102 is G2 motif; the sequence is VTR. The interval 176 to 179 is G3 motif; it reads DLPG. GTP is bound by residues 176–180 and 245–248; these read DLPGI and TKPD. The interval 245–248 is G4 motif; the sequence is TKPD. The segment at 277–280 is G5 motif; the sequence is KCRG. Residues 547-567 form a disordered region; the sequence is EAEEEERKHGKSRSSQSKNLQ. Residues 571 to 659 form the GED domain; that stretch reads MDEIFQHLNA…AQRRLAKFPG (89 aa).

The protein belongs to the TRAFAC class dynamin-like GTPase superfamily. Dynamin/Fzo/YdjA family.

It localises to the cytoplasm. Interferon-induced dynamin-like GTPase with antiviral activity against vesicular stomatitis virus (VSV). This chain is Interferon-induced GTP-binding protein Mx2 (Mx2), found in Rattus norvegicus (Rat).